A 329-amino-acid chain; its full sequence is Tagatose 1,6-diphosphate aldolase 2 (329 aa).

This sequence belongs to the aldolase LacD family.

The enzyme catalyses D-tagatofuranose 1,6-bisphosphate = D-glyceraldehyde 3-phosphate + dihydroxyacetone phosphate. Its pathway is carbohydrate metabolism; D-tagatose 6-phosphate degradation; D-glyceraldehyde 3-phosphate and glycerone phosphate from D-tagatose 6-phosphate: step 2/2. The polypeptide is Tagatose 1,6-diphosphate aldolase 2 (lacD2) (Streptococcus mutans serotype c (strain ATCC 700610 / UA159)).